We begin with the raw amino-acid sequence, 510 residues long: NAD(P)H-quinone oxidoreductase subunit 2 B, chloroplastic (510 aa).

Transmembrane regions (helical) follow at residues 24–44 (LLLFDGSLIFPECILIFGLIL), 57–77 (IPWLYFISSTSLVMSITALLF), 99–119 (IFQFLILLCSTLCIPLSVEYI), 124–144 (MAITEFLLFILTATIGGMFLC), 149–169 (LITIFVAPECFSLCSYLLSGY), 183–203 (YLLMGGASSSILVHGFSWLYG), 227–247 (PGISIALIFITVGIGFKLSPA), 295–315 (WHLLLEILAILSMILGNLIAI), 323–343 (MLAYSSIGQIGYVIIGIIVGD), 354–374 (YMLFYISMNLGTFACIVLFGL), 395–415 (ALSLALCLLSLGGLPPLAGFF), 418–438 (LYLFWCGWQAGLYLLVLIGLL), and 484–504 (MIVCVIASTIPGISMNPIIAI).

Belongs to the complex I subunit 2 family. NDH is composed of at least 16 different subunits, 5 of which are encoded in the nucleus.

It localises to the plastid. Its subcellular location is the chloroplast thylakoid membrane. The enzyme catalyses a plastoquinone + NADH + (n+1) H(+)(in) = a plastoquinol + NAD(+) + n H(+)(out). The catalysed reaction is a plastoquinone + NADPH + (n+1) H(+)(in) = a plastoquinol + NADP(+) + n H(+)(out). NDH shuttles electrons from NAD(P)H:plastoquinone, via FMN and iron-sulfur (Fe-S) centers, to quinones in the photosynthetic chain and possibly in a chloroplast respiratory chain. The immediate electron acceptor for the enzyme in this species is believed to be plastoquinone. Couples the redox reaction to proton translocation, and thus conserves the redox energy in a proton gradient. This Helianthus annuus (Common sunflower) protein is NAD(P)H-quinone oxidoreductase subunit 2 B, chloroplastic.